We begin with the raw amino-acid sequence, 95 residues long: Aspartyl/glutamyl-tRNA(Asn/Gln) amidotransferase subunit C (95 aa).

The protein belongs to the GatC family. As to quaternary structure, heterotrimer of A, B and C subunits.

The catalysed reaction is L-glutamyl-tRNA(Gln) + L-glutamine + ATP + H2O = L-glutaminyl-tRNA(Gln) + L-glutamate + ADP + phosphate + H(+). The enzyme catalyses L-aspartyl-tRNA(Asn) + L-glutamine + ATP + H2O = L-asparaginyl-tRNA(Asn) + L-glutamate + ADP + phosphate + 2 H(+). Functionally, allows the formation of correctly charged Asn-tRNA(Asn) or Gln-tRNA(Gln) through the transamidation of misacylated Asp-tRNA(Asn) or Glu-tRNA(Gln) in organisms which lack either or both of asparaginyl-tRNA or glutaminyl-tRNA synthetases. The reaction takes place in the presence of glutamine and ATP through an activated phospho-Asp-tRNA(Asn) or phospho-Glu-tRNA(Gln). The protein is Aspartyl/glutamyl-tRNA(Asn/Gln) amidotransferase subunit C of Methylorubrum extorquens (strain CM4 / NCIMB 13688) (Methylobacterium extorquens).